The sequence spans 444 residues: MLPPKLHALFCLCSCLTLVHPIDWQDLNPVAHIRSSAWANKIQALMAAASIRQSRIPKGNGSYSVGCTDLMFDYTNKGTFLRLYYPSQEDDHSDTLWIPNKEYFFGLSKYLGTPWLMGKILSFFFGSVTTPANWNSPLRTGEKYPLIVFSHGLGAFRTIYSAIGIDLASHGFIVAAIEHRDGSASATYYFKDQSAAEIGNKSWSYLQELKPGDEEIHVRNEQVQKRAKECSQALNLILDIDHGRPIKNVLDLEFDVEQLKDSIDRDKIAVIGHSFGGATVLQALSEDQRFRCGIALDAWMLPLDDAIYSRIPQPLFFINSERFQFPENIKKMKKCYSPDKERKMITIRGSVHQNFADFTFTTGKIVGYIFTLKGDIDSNVAIDLCNKASLAFLQKHLGLRKDFDQWDSLIEGKDENLMPGTNINITNEHDTLQNSPEAEKSNLD.

An N-terminal signal peptide occupies residues Met1–Pro21. Residues Asn60 and Asn200 are each glycosylated (N-linked (GlcNAc...) asparagine). The active-site Nucleophile is Ser274. Residues Asp297 and His352 each act as charge relay system in the active site. The N-linked (GlcNAc...) asparagine glycan is linked to Asn424.

The protein belongs to the AB hydrolase superfamily. Lipase family. N-glycosylated. As to expression, plasma.

It is found in the secreted. The protein resides in the extracellular space. The catalysed reaction is a 1-O-alkyl-2-acetyl-sn-glycero-3-phosphocholine + H2O = a 1-O-alkyl-sn-glycero-3-phosphocholine + acetate + H(+). It catalyses the reaction 1-O-decyl-2-acetyl-sn-glycero-3-phosphocholine + H2O = 1-O-decyl-sn-glycero-3-phosphocholine + acetate + H(+). It carries out the reaction 1-O-dodecyl-2-acetyl-sn-glycero-3-phosphocholine + H2O = 1-O-dodecyl-sn-glycero-3-phosphocholine + acetate + H(+). The enzyme catalyses 1-O-tetradecyl-2-acetyl-sn-glycero-3-phosphocholine + H2O = 1-O-tetradecyl-sn-glycero-3-phosphocholine + acetate + H(+). The catalysed reaction is 1-O-hexadecyl-2-acetyl-sn-glycero-3-phosphocholine + H2O = 1-O-hexadecyl-sn-glycero-3-phosphocholine + acetate + H(+). It catalyses the reaction 1-O-octadecyl-2-acetyl-sn-glycero-3-phosphocholine + H2O = 1-O-octadecyl-sn-glycero-3-phosphocholine + acetate + H(+). It carries out the reaction 1-hexadecanoyl-2-acetyl-sn-glycero-3-phosphocholine + H2O = 1-hexadecanoyl-sn-glycero-3-phosphocholine + acetate + H(+). The enzyme catalyses 1-hexadecanoyl-2-propionyl-sn-glycero-3-phosphocholine + H2O = propanoate + 1-hexadecanoyl-sn-glycero-3-phosphocholine + H(+). The catalysed reaction is 1-hexadecanoyl-2-butanoyl-sn-glycero-3-phosphocholine + H2O = butanoate + 1-hexadecanoyl-sn-glycero-3-phosphocholine + H(+). It catalyses the reaction 1-hexadecanoyl-2-pentanoyl-sn-glycero-3-phosphocholine + H2O = pentanoate + 1-hexadecanoyl-sn-glycero-3-phosphocholine + H(+). It carries out the reaction 1-hexadecanoyl-2-glutaroyl-sn-glycero-3-phosphocholine + H2O = glutarate + 1-hexadecanoyl-sn-glycero-3-phosphocholine + H(+). The enzyme catalyses 1-hexadecanoyl-2-(5-oxopentanoyl)-sn-glycero-3-phosphocholine + H2O = 5-oxopentanoate + 1-hexadecanoyl-sn-glycero-3-phosphocholine + H(+). The catalysed reaction is 1-hexadecanoyl-2-(9-oxononanoyl)-sn-glycero-3-phosphocholine + H2O = 9-oxononanoate + 1-hexadecanoyl-sn-glycero-3-phosphocholine + H(+). It catalyses the reaction 1-hexadecanoyl-2-[9-hydroperoxy-(10E-octadecenoyl)]-sn-glycero-3-phosphocholine + H2O = 9-hydroperoxy-10E-octadecenoate + 1-hexadecanoyl-sn-glycero-3-phosphocholine + H(+). It carries out the reaction 1-hexadecanoyl-2-(10-hydroperoxy-8E-octadecenoyl)-sn-glycero-3-phosphocholine + H2O = 10-hydroperoxy-(8E)-octadecenoate + 1-hexadecanoyl-sn-glycero-3-phosphocholine + H(+). Functionally, lipoprotein-associated calcium-independent phospholipase A2 involved in phospholipid catabolism during inflammatory and oxidative stress response. At the lipid-aqueous interface, hydrolyzes the ester bond of fatty acyl group attached at sn-2 position of phospholipids (phospholipase A2 activity). Specifically targets phospholipids with a short-chain fatty acyl group at sn-2 position. Can hydrolyze phospholipids with long fatty acyl chains, only if they carry oxidized functional groups. Hydrolyzes and inactivates platelet-activating factor (PAF, 1-O-alkyl-2-acetyl-sn-glycero-3-phosphocholine), a potent pro-inflammatory signaling lipid that acts through PTAFR on various innate immune cells. Hydrolyzes oxidatively truncated phospholipids carrying an aldehyde group at omega position, preventing their accumulation in low-density lipoprotein (LDL) particles and uncontrolled pro-inflammatory effects. As part of high-density lipoprotein (HDL) particles, can hydrolyze phospholipids having long-chain fatty acyl hydroperoxides at sn-2 position and protect against potential accumulation of these oxylipins in the vascular wall. Catalyzes the release from membrane phospholipids of F2-isoprostanes, lipid biomarkers of cellular oxidative damage. The polypeptide is Platelet-activating factor acetylhydrolase (PLA2G7) (Canis lupus familiaris (Dog)).